The sequence spans 371 residues: uncharacterized protein (371 aa).

The helical transmembrane segment at 17 to 33 threads the bilayer; it reads FLLFSVVLIIVMTTLVF.

The protein to S.pombe SpBC4C3.08 and SpBC4C3.09.

The protein resides in the membrane. This is an uncharacterized protein from Schizosaccharomyces pombe (strain 972 / ATCC 24843) (Fission yeast).